A 794-amino-acid chain; its full sequence is Protein smoothened (794 aa).

The N-terminal stretch at 1-15 (GPCWLWALALGLALG) is a signal peptide. Residues 16–201 (PRRCPAAPLN…FTETEHREMH (186 aa)) lie on the Extracellular side of the membrane. An N-linked (GlcNAc...) asparagine glycan is attached at Asn-25. 5 disulfide bridges follow: Cys-34/Cys-148, Cys-40/Cys-104, Cys-48/Cys-97, Cys-88/Cys-124, and Cys-117/Cys-139. In terms of domain architecture, FZ spans 35 to 151 (RRPAACERLR…DRFPEGCPNE (117 aa)). Position 65 (Asp-65) interacts with cholesterol. An N-linked (GlcNAc...) asparagine glycan is attached at Asn-158. 2 disulfide bridges follow: Cys-163–Cys-183 and Cys-187–Cys-264. A helical membrane pass occupies residues 202–222 (VYIAFSSVTISCTFFTLATFV). The Cytoplasmic segment spans residues 223–231 (ADWRNSNRY). A helical membrane pass occupies residues 232–252 (PAVILFYVNACFFVGSIGCVA). At 253–283 (QFMDGARDEIVCRADGTMRLGEPTSNETLSC) the chain is on the extracellular side. Asn-278 carries an N-linked (GlcNAc...) asparagine glycan. The cysteines at positions 283 and 359 are disulfide-linked. A helical transmembrane segment spans residues 284 to 304 (VIIFVIVYYSLMSGVIWFVML). The Cytoplasmic segment spans residues 305–327 (TYAWHTSFKALGTTYQPLLGKTS). The helical transmembrane segment at 328 to 348 (YFHLITWSIPFVLTVAILAVA) threads the bilayer. Over 349-371 (QVDGDSVSGICFVGYKNYRYRAG) the chain is Extracellular. Tyr-363 lines the cholesterol pocket. The helical transmembrane segment at 372–392 (FVLAPIGLVLIVGGYFLIRGV) threads the bilayer. At 393–420 (MTLFSIKSNHPGLLSEKAASKINETMLR) the chain is on the cytoplasmic side. The chain crosses the membrane as a helical span at residues 421–440 (LGIFGFLAFGFVFITFGCHF). The Extracellular segment spans residues 441–493 (YDFFNQAEWERSFREYVLCEANVTIATQTNKPIPECEIKNRPSLLVEKINLFA). A disulfide bridge connects residues Cys-459 and Cys-476. The N-linked (GlcNAc...) asparagine glycan is linked to Asn-462. Residues 494-514 (MFGTGISMSTWVWTKATLLIW) form a helical membrane-spanning segment. Over 515–794 (KRTWCRLTGQ…AELLDADLDF (280 aa)) the chain is Cytoplasmic. 2 disordered regions span residues 634-655 (LQKR…CPER) and 723-773 (PFCP…RAGL). Positions 637–647 (RSRKKKRRKKK) are enriched in basic residues.

It belongs to the G-protein coupled receptor Fz/Smo family. Homodimer.

The protein localises to the cell membrane. It localises to the cell projection. The protein resides in the cilium. Functionally, g protein-coupled receptor which associates with the patched protein (PTCH) to transduce hedgehog protein signaling. Binding of sonic hedgehog (SHH) to its receptor patched prevents inhibition of smoothened (SMO) by patched. When active, SMO binds to and sequesters protein kinase A catalytic subunit PRKACA at the cell membrane, preventing PRKACA-mediated phosphorylation of GLI transcription factors which releases the GLI proteins from PRKACA-mediated inhibition and allows for transcriptional activation of hedgehog pathway target genes. The protein is Protein smoothened (SMO) of Gallus gallus (Chicken).